The chain runs to 1401 residues: DNA-directed RNA polymerase subunit beta' (1401 aa).

4 residues coordinate Zn(2+): C70, C72, C85, and C88. The Mg(2+) site is built by D460, D462, and D464. Zn(2+)-binding residues include C808, C882, C889, and C892.

It belongs to the RNA polymerase beta' chain family. As to quaternary structure, the RNAP catalytic core consists of 2 alpha, 1 beta, 1 beta' and 1 omega subunit. When a sigma factor is associated with the core the holoenzyme is formed, which can initiate transcription. The cofactor is Mg(2+). Zn(2+) is required as a cofactor.

The catalysed reaction is RNA(n) + a ribonucleoside 5'-triphosphate = RNA(n+1) + diphosphate. In terms of biological role, DNA-dependent RNA polymerase catalyzes the transcription of DNA into RNA using the four ribonucleoside triphosphates as substrates. The sequence is that of DNA-directed RNA polymerase subunit beta' from Legionella pneumophila (strain Paris).